We begin with the raw amino-acid sequence, 640 residues long: uncharacterized protein (640 aa).

One can recognise a TIR domain in the interval Val-184–Ile-328. Residues Leu-613–Glu-640 form a disordered region. A compositionally biased stretch (acidic residues) spans Asp-616–Asp-626.

This is an uncharacterized protein from Sinorhizobium fredii (strain NBRC 101917 / NGR234).